A 92-amino-acid chain; its full sequence is Small ribosomal subunit protein bS20 (92 aa).

Disordered regions lie at residues 1 to 25 (MALR…NRAK) and 68 to 92 (HKNA…AQQA). The segment covering 80 to 92 (AKAINKAKAAQQA) has biased composition (low complexity).

This sequence belongs to the bacterial ribosomal protein bS20 family.

Its function is as follows. Binds directly to 16S ribosomal RNA. This Deinococcus radiodurans (strain ATCC 13939 / DSM 20539 / JCM 16871 / CCUG 27074 / LMG 4051 / NBRC 15346 / NCIMB 9279 / VKM B-1422 / R1) protein is Small ribosomal subunit protein bS20.